Here is a 554-residue protein sequence, read N- to C-terminus: Valerianol synthase TPS8 (554 aa).

The short motif at 288–292 is the DDXXD motif element; the sequence is QHSVG. Mg(2+) contacts are provided by Asp-307, Asp-311, Asp-452, Ser-456, and Glu-460.

The protein belongs to the terpene synthase family. Requires Mg(2+) as cofactor.

The enzyme catalyses (2E,6E)-farnesyl diphosphate + H2O = valerianol + diphosphate. It participates in secondary metabolite biosynthesis; terpenoid biosynthesis. Terpene synthase that catalyzes the biosynthesis of the terpene valerianol. In Camellia sinensis (Tea plant), this protein is Valerianol synthase TPS8.